The chain runs to 347 residues: Phenylalanine--tRNA ligase alpha subunit (347 aa).

Position 262 (E262) interacts with Mg(2+).

This sequence belongs to the class-II aminoacyl-tRNA synthetase family. Phe-tRNA synthetase alpha subunit type 1 subfamily. In terms of assembly, tetramer of two alpha and two beta subunits. The cofactor is Mg(2+).

The protein localises to the cytoplasm. It carries out the reaction tRNA(Phe) + L-phenylalanine + ATP = L-phenylalanyl-tRNA(Phe) + AMP + diphosphate + H(+). This is Phenylalanine--tRNA ligase alpha subunit from Roseiflexus sp. (strain RS-1).